The primary structure comprises 101 residues: Small ribosomal subunit protein uS14 (101 aa).

Belongs to the universal ribosomal protein uS14 family. Part of the 30S ribosomal subunit. Contacts proteins S3 and S10.

Its function is as follows. Binds 16S rRNA, required for the assembly of 30S particles and may also be responsible for determining the conformation of the 16S rRNA at the A site. In Erythrobacter litoralis (strain HTCC2594), this protein is Small ribosomal subunit protein uS14.